Here is a 163-residue protein sequence, read N- to C-terminus: Cyanate hydratase (163 aa).

Active-site residues include Arg-103, Glu-106, and Ser-129.

Belongs to the cyanase family.

The enzyme catalyses cyanate + hydrogencarbonate + 3 H(+) = NH4(+) + 2 CO2. In terms of biological role, catalyzes the reaction of cyanate with bicarbonate to produce ammonia and carbon dioxide. This Paracoccidioides lutzii (strain ATCC MYA-826 / Pb01) (Paracoccidioides brasiliensis) protein is Cyanate hydratase.